The primary structure comprises 405 residues: Aspartokinase (405 aa).

ACT domains lie at 267–344 (VSME…AKVS) and 345–405 (IVGV…QLDQ).

Belongs to the aspartokinase family.

It carries out the reaction L-aspartate + ATP = 4-phospho-L-aspartate + ADP. It functions in the pathway amino-acid biosynthesis; L-lysine biosynthesis via DAP pathway; (S)-tetrahydrodipicolinate from L-aspartate: step 1/4. Its pathway is amino-acid biosynthesis; L-methionine biosynthesis via de novo pathway; L-homoserine from L-aspartate: step 1/3. The protein operates within amino-acid biosynthesis; L-threonine biosynthesis; L-threonine from L-aspartate: step 1/5. This chain is Aspartokinase (lysC), found in Helicobacter pylori (strain J99 / ATCC 700824) (Campylobacter pylori J99).